The primary structure comprises 114 residues: UPF0757 protein YmgG (114 aa).

The protein belongs to the UPF0757 family.

The polypeptide is UPF0757 protein YmgG (Edwardsiella ictaluri (strain 93-146)).